Reading from the N-terminus, the 292-residue chain is Putative ribonuclease 3 (292 aa).

The 127-residue stretch at 32–158 (LGMSDEYIPY…FFGATEWLID (127 aa)) folds into the RNase III domain. A DRBM domain is found at 204 to 276 (DAKTRFNEVI…ASRALETLAL (73 aa)).

It belongs to the IIV-6 142R family.

The catalysed reaction is Endonucleolytic cleavage to 5'-phosphomonoester.. Its function is as follows. Digests double-stranded RNA. In Acheta domesticus (House cricket), this protein is Putative ribonuclease 3.